Consider the following 166-residue polypeptide: CDP-archaeol synthase (166 aa).

The next 5 membrane-spanning stretches (helical) occupy residues 1 to 21 (MPII…LVAN), 55 to 75 (LLVA…FLGI), 78 to 98 (IYVS…GAFI), 110 to 130 (AIGL…IISK), and 131 to 151 (ISLN…LHIL).

It belongs to the CDP-archaeol synthase family. Mg(2+) is required as a cofactor.

It is found in the cell membrane. The enzyme catalyses 2,3-bis-O-(geranylgeranyl)-sn-glycerol 1-phosphate + CTP + H(+) = CDP-2,3-bis-O-(geranylgeranyl)-sn-glycerol + diphosphate. It participates in membrane lipid metabolism; glycerophospholipid metabolism. Functionally, catalyzes the formation of CDP-2,3-bis-(O-geranylgeranyl)-sn-glycerol (CDP-archaeol) from 2,3-bis-(O-geranylgeranyl)-sn-glycerol 1-phosphate (DGGGP) and CTP. This reaction is the third ether-bond-formation step in the biosynthesis of archaeal membrane lipids. The chain is CDP-archaeol synthase from Sulfurisphaera tokodaii (strain DSM 16993 / JCM 10545 / NBRC 100140 / 7) (Sulfolobus tokodaii).